A 305-amino-acid chain; its full sequence is Probable 5-dehydro-4-deoxyglucarate dehydratase (305 aa).

This sequence belongs to the DapA family.

It catalyses the reaction 5-dehydro-4-deoxy-D-glucarate + H(+) = 2,5-dioxopentanoate + CO2 + H2O. The protein operates within carbohydrate acid metabolism; D-glucarate degradation; 2,5-dioxopentanoate from D-glucarate: step 2/2. In Xanthomonas campestris pv. campestris (strain 8004), this protein is Probable 5-dehydro-4-deoxyglucarate dehydratase.